We begin with the raw amino-acid sequence, 1515 residues long: Lysophospholipase nte1 (1515 aa).

The Cytoplasmic segment spans residues 1 to 59; sequence MESLSNLGNAMSSVLSETTSTTATAILADPTEALSSVVALASDAVSKATSDVVPEHTPT. The helical transmembrane segment at 60-80 threads the bilayer; that stretch reads SWFTIILWLLHRISSVLYFVI. The Lumenal portion of the chain corresponds to 81–102; the sequence is KLTTITTPTFLFNIFSTSLTVT. A helical transmembrane segment spans residues 103–123; the sequence is MNATTLVLIMLFMMAGVTWVV. Residues 124–1515 are Cytoplasmic-facing; the sequence is RYRYLNMYSR…RTMAPRRASI (1392 aa). 3 disordered regions span residues 278 to 303, 519 to 580, and 617 to 639; these read MHDTDDDDSPDPTPSAPGTAMPGYPM, VTAT…TPRN, and VNPDSTQASPRFVPTDQRRSRGG. Composition is skewed to polar residues over residues 543–554 and 566–579; these read LTNTQQLKSGPA and PRPQRNLSPFSTPR. A nucleoside 3',5'-cyclic phosphate contacts are provided by residues 670 to 789 and 835 to 955; these read SPVP…LAGY and RLTE…IAAR. Residues 1212-1376 form the PNPLA domain; that stretch reads LVLGGGGARG…IDNLTVSRMK (165 aa). A GXGXXG motif is present at residues 1216–1221; that stretch reads GGGARG. The GXSXG signature appears at 1243–1247; sequence GTSIG. S1245 serves as the catalytic Nucleophile. D1363 functions as the Proton acceptor in the catalytic mechanism. The DGA/G motif lies at 1363–1365; sequence DGG.

It belongs to the NTE family.

It localises to the endoplasmic reticulum membrane. It catalyses the reaction a 1-acyl-sn-glycero-3-phosphocholine + H2O = sn-glycerol 3-phosphocholine + a fatty acid + H(+). Its activity is regulated as follows. Inhibited by organophosphorus esters. Functionally, intracellular phospholipase B that catalyzes the double deacylation of phosphatidylcholine (PC) to glycerophosphocholine (GroPCho). Plays an important role in membrane lipid homeostasis. Responsible for the rapid PC turnover in response to inositol, elevated temperatures, or when choline is present in the growth medium. The sequence is that of Lysophospholipase nte1 (nte1) from Neurospora crassa (strain ATCC 24698 / 74-OR23-1A / CBS 708.71 / DSM 1257 / FGSC 987).